Consider the following 304-residue polypeptide: Murein tetrapeptide carboxypeptidase (304 aa).

The Nucleophile role is filled by serine 106. Residues glutamate 200 and histidine 270 each act as charge relay system in the active site.

The protein belongs to the peptidase S66 family.

It localises to the cytoplasm. It catalyses the reaction N-acetyl-D-glucosaminyl-N-acetylmuramoyl-L-alanyl-meso-2,6-diaminoheptanedioyl-D-alanine + H2O = N-acetyl-D-glucosaminyl-N-acetylmuramoyl-L-alanyl-meso-2,6-diaminoheptanedioate + D-alanine. Its pathway is cell wall biogenesis; peptidoglycan recycling. Inhibited by beta-lactams containing a D-amino acid side chain. Releases the terminal D-alanine residue from the cytoplasmic tetrapeptide recycling product L-Ala-gamma-D-Glu-meso-Dap-D-Ala. To a lesser extent, can also cleave D-Ala from murein derivatives containing the tetrapeptide, i.e. MurNAc-tetrapeptide, UDP-MurNAc-tetrapeptide, GlcNAc-MurNAc-tetrapeptide, and GlcNAc-anhMurNAc-tetrapeptide. Does not act on murein sacculi or cross-linked muropeptides. The tripeptides produced by the LcdA reaction can then be reused as peptidoglycan building blocks; LcdA is thereby involved in murein recycling. Is also essential for viability during stationary phase. This chain is Murein tetrapeptide carboxypeptidase (ldcA), found in Escherichia coli (strain K12).